The chain runs to 451 residues: uncharacterized protein (451 aa).

Helical transmembrane passes span 11 to 31 (VLLKLIQILFFTISISIYIDL), 56 to 76 (IQIYYWFVGIILFSIAWSIGT), 151 to 171 (IIGIQSCLIIFFSTLGFNIYL), 175 to 195 (FWLIKTIIVDWIISAILLIIF), and 207 to 227 (VYSVISYIFGSNVLGFGTIKI). The tract at residues 250-300 (TKSNNNNNNNNNNKQDDNIIYDTDSSFNGQSSSSSSSSSSSSSSSSSATTT) is disordered. Low complexity-rich tracts occupy residues 253–262 (NNNNNNNNNN) and 280–300 (SSSSSSSSSSSSSSSSSATTT). 2 helical membrane-spanning segments follow: residues 392 to 412 (FVGVIILWVYTISNFIISDYS) and 413 to 433 (LLTIPNILVVVGFSGTILTYL).

The protein localises to the membrane. This is an uncharacterized protein from Dictyostelium discoideum (Social amoeba).